Here is a 438-residue protein sequence, read N- to C-terminus: 23S rRNA (uracil(1939)-C(5))-methyltransferase RlmD (438 aa).

In terms of domain architecture, TRAM spans 8–68 (KQKTNNVQTI…RQYGHATAKK (61 aa)). [4Fe-4S] cluster contacts are provided by Cys-81, Cys-87, Cys-90, and Cys-168. Gln-271, Phe-300, Asn-305, Glu-321, Asp-348, and Asp-369 together coordinate S-adenosyl-L-methionine. Cys-395 serves as the catalytic Nucleophile.

The protein belongs to the class I-like SAM-binding methyltransferase superfamily. RNA M5U methyltransferase family. RlmD subfamily.

It carries out the reaction uridine(1939) in 23S rRNA + S-adenosyl-L-methionine = 5-methyluridine(1939) in 23S rRNA + S-adenosyl-L-homocysteine + H(+). Catalyzes the formation of 5-methyl-uridine at position 1939 (m5U1939) in 23S rRNA. This chain is 23S rRNA (uracil(1939)-C(5))-methyltransferase RlmD, found in Haemophilus influenzae (strain 86-028NP).